The following is a 196-amino-acid chain: Phosphoheptose isomerase (196 aa).

An SIS domain is found at 34 to 196 (MVQCLLGGKK…DRTLFPQDEA (163 aa)). Residue 49–51 (NGG) coordinates substrate. 2 residues coordinate Zn(2+): His58 and Glu62. Substrate is bound by residues Glu62, 91 to 92 (ND), 117 to 119 (STS), Ser122, and Gln172. Zn(2+) is bound by residues Gln172 and His180.

It belongs to the SIS family. GmhA subfamily. As to quaternary structure, homotetramer. Requires Zn(2+) as cofactor.

The protein localises to the cytoplasm. The enzyme catalyses 2 D-sedoheptulose 7-phosphate = D-glycero-alpha-D-manno-heptose 7-phosphate + D-glycero-beta-D-manno-heptose 7-phosphate. The protein operates within carbohydrate biosynthesis; D-glycero-D-manno-heptose 7-phosphate biosynthesis; D-glycero-alpha-D-manno-heptose 7-phosphate and D-glycero-beta-D-manno-heptose 7-phosphate from sedoheptulose 7-phosphate: step 1/1. Functionally, catalyzes the isomerization of sedoheptulose 7-phosphate in D-glycero-D-manno-heptose 7-phosphate. The chain is Phosphoheptose isomerase from Shewanella denitrificans (strain OS217 / ATCC BAA-1090 / DSM 15013).